A 341-amino-acid chain; its full sequence is Glyceraldehyde-3-phosphate dehydrogenase 2 (341 aa).

Residues 13-14 (RI), Asp-35, and Arg-85 contribute to the NAD(+) site. Residues 157 to 159 (SCT), Thr-188, 217 to 218 (TG), and Arg-240 contribute to the D-glyceraldehyde 3-phosphate site. Catalysis depends on Cys-158, which acts as the Nucleophile. Residue Asn-322 coordinates NAD(+).

This sequence belongs to the glyceraldehyde-3-phosphate dehydrogenase family. Homotetramer.

It localises to the cytoplasm. It carries out the reaction D-glyceraldehyde 3-phosphate + phosphate + NAD(+) = (2R)-3-phospho-glyceroyl phosphate + NADH + H(+). Its pathway is carbohydrate degradation; glycolysis; pyruvate from D-glyceraldehyde 3-phosphate: step 1/5. This chain is Glyceraldehyde-3-phosphate dehydrogenase 2 (gpd-2), found in Caenorhabditis elegans.